Reading from the N-terminus, the 365-residue chain is Deoxyribonuclease-2-alpha (365 aa).

Positions 1–19 (MATLSSLLLTALLWVPVGT) are cleaved as a signal peptide. An intrachain disulfide couples Cys-22 to Cys-162. N-linked (GlcNAc...) asparagine glycosylation is found at Asn-215, Asn-269, and Asn-293. 2 cysteine pairs are disulfide-bonded: Cys-270/Cys-348 and Cys-311/Cys-330. His-298 is an active-site residue.

This sequence belongs to the DNase II family.

Its subcellular location is the lysosome. The catalysed reaction is Endonucleolytic cleavage to nucleoside 3'-phosphates and 3'-phosphooligonucleotide end-products.. Hydrolyzes DNA under acidic conditions with a preference for double-stranded DNA. Plays a major role in the clearance of nucleic acids generated through apoptosis, hence preventing autoinflammation. Necessary for proper fetal development and for definitive erythropoiesis in fetal liver and bone marrow, where it degrades nuclear DNA expelled from erythroid precursor cells. In Bos taurus (Bovine), this protein is Deoxyribonuclease-2-alpha (DNASE2).